The sequence spans 108 residues: Cytochrome c-555 (108 aa).

The first 22 residues, 1 to 22 (MSRFVSAALVGAALLVSGNAFA), serve as a signal peptide directing secretion. Cys-36, Cys-39, His-40, and Met-82 together coordinate heme c.

In terms of processing, binds 1 heme c group covalently per subunit.

Functionally, this basic c-type monoheme cytochrome has been found exclusively in the green photosynthetic bacteria, although its role in bacterial photosynthesis is not established. It has an unusually low redox potential compared with mitochondrial cytochrome c. It is reactive with cytochrome c oxidases but not with reductases. This is Cytochrome c-555 from Chlorobaculum tepidum (strain ATCC 49652 / DSM 12025 / NBRC 103806 / TLS) (Chlorobium tepidum).